We begin with the raw amino-acid sequence, 445 residues long: Putative ankyrin repeat protein L797 (445 aa).

ANK repeat units lie at residues 73 to 102 (FMED…DIYS), 285 to 314 (NHEH…ELVG), 315 to 344 (NLYI…DIRQ), and 346 to 375 (LDAF…IINI).

This chain is Putative ankyrin repeat protein L797, found in Acanthamoeba polyphaga (Amoeba).